The following is a 405-amino-acid chain: Prenyltransferase phqA (405 aa).

Tyr-195, Lys-262, and Gln-332 together coordinate dimethylallyl diphosphate.

It belongs to the tryptophan dimethylallyltransferase family.

The protein operates within alkaloid biosynthesis. In terms of biological role, prenyltransferase; part of the gene cluster that mediates the biosynthesis of paraherquamide, a fungal indole alkaloid that belongs to a family of natural products containing a characteristic bicyclo[2.2.2]diazaoctane core. The first steps in the biosynthesis of paraherquamide is the production of the beta-methyl-proline precursor from L-isoleucine. They require oxidation of a terminally hydroxylated L-isoleucine to the corresponding aldehyde by enzymes which have still to be identified. Spontaneous cyclization and dehydration would yield the 4-methyl pyrolline-5-carboxylic acid, which is then reduced by the pyrroline-5-carboxylate reductase phqD leading to the beta-methyl-proline precursor. The next step of paraherquamide biosynthesis involves coupling of beta-methyl-proline and L-tryptophan by the bimodular NRPS phqB, to produce a monooxopiperazine intermediate. The reductase (R) domain of phqB utilizes NADPH for hydride transfer to reduce the thioester bond of the T domain-tethered linear dipeptide to a hemithioaminal intermediate, which spontaneously cleaves the C-S bond to release the aldehyde product. This compound undergoes spontaneous cyclization and dehydration to give a dienamine which is reverse prenylated at C-2 by the reverse prenyltransferase phqJ. The other prenyltransferase present in the cluster, phqI may be a redundant gene in the pathway. During biosynthetic assembly, the key step to produce the polycyclic core is catalyzed by the bifunctional reductase and intramolecular [4+2] Diels-Alderase, phqE, resulting in formation of the [2.2.2] diazaoctane intermediate preparaherquamide. Following formation of preparaherquamide, an indole 2,3-epoxidation-initiated pinacol-like rearrangement is catalyzed by the phqK FAD-dependent monooxygenase. The prenyltransferase phqA, the cytochrome P450 monooxygenase phqL, and the FAD-linked oxidoreductase phqH (or the cytochrome P450 monooxygenase phqM), are proposed to be involved in the formation of the pyran ring. The FAD-dependent monooxygenase phqK is likely responsible for generation of the spiro-oxindole, and the N-methylation is likely mediated by the phqN methyltransferase leading to the isolable natural product paraherquamide F. However, the order of these biosynthetic steps has still to be determined. In late-stage paraherquamide biosynthesis, the third P450 monooxygenase, phqO, is probably responsible for the C-14 hydroxylation, transforming paraherquamide F to paraherquamide G, and paraherquamide E to the final product paraherquamide A. The expansion from the 6-membered ring pyran (in paraherquamides F and G) to the 7-membered dioxepin ring (in paraherquamides A and E) represents a poorly understood but intriguing process that probably involves the 2-oxoglutarate-dependent dioxygenase phqC. Finally, the remaining members of the paraherquamide cluster, including phqI as well as phqM (or phqH), do not have a clearly prescribed role and appear to be redundant. This chain is Prenyltransferase phqA, found in Penicillium fellutanum.